The chain runs to 141 residues: MAKKVEKLVKLQIPAGKATPAPPVGPALGQAGINIMGFTKEFNARTADQAGMIIPVVISVYEDKSFTFVTKTPPAAVLLKKAAGVEKGSGEPNKTKVATVTRAQVQEIAETKMPDLNAANIESAMRMIEGTARSMGFTVVD.

It belongs to the universal ribosomal protein uL11 family. In terms of assembly, part of the ribosomal stalk of the 50S ribosomal subunit. Interacts with L10 and the large rRNA to form the base of the stalk. L10 forms an elongated spine to which L12 dimers bind in a sequential fashion forming a multimeric L10(L12)X complex. One or more lysine residues are methylated.

Functionally, forms part of the ribosomal stalk which helps the ribosome interact with GTP-bound translation factors. In Streptococcus sanguinis (strain SK36), this protein is Large ribosomal subunit protein uL11.